The chain runs to 505 residues: Amidophosphoribosyltransferase (505 aa).

C2 functions as the Nucleophile in the catalytic mechanism. Residues 2-235 form the Glutamine amidotransferase type-2 domain; sequence CGIVGIVSQS…AGEAVYVTFD (234 aa). T306, D368, and D369 together coordinate Mg(2+). The interval 484–505 is disordered; that stretch reads RNDNAKKKREKQASNLEIYNEQ. A compositionally biased stretch (polar residues) spans 496–505; it reads ASNLEIYNEQ.

This sequence in the C-terminal section; belongs to the purine/pyrimidine phosphoribosyltransferase family. Mg(2+) is required as a cofactor.

It carries out the reaction 5-phospho-beta-D-ribosylamine + L-glutamate + diphosphate = 5-phospho-alpha-D-ribose 1-diphosphate + L-glutamine + H2O. It participates in purine metabolism; IMP biosynthesis via de novo pathway; N(1)-(5-phospho-D-ribosyl)glycinamide from 5-phospho-alpha-D-ribose 1-diphosphate: step 1/2. Its function is as follows. Catalyzes the formation of phosphoribosylamine from phosphoribosylpyrophosphate (PRPP) and glutamine. The chain is Amidophosphoribosyltransferase from Haemophilus influenzae (strain ATCC 51907 / DSM 11121 / KW20 / Rd).